The sequence spans 300 residues: C-5 sterol desaturase (300 aa).

Helical transmembrane passes span 3 to 23 (DPVLFAIPCFLLLLILEWTAA), 68 to 88 (SLALLGYAAIYAYLAPWQLSA), 91 to 111 (WYTWVIAIVGVDLLYYSYHRI), and 147 to 167 (ILMWVPLPLMGLPPWMVFCSW). Residues 94–227 (WVIAIVGVDL…LIIWDRLFGS (134 aa)) form the Fatty acid hydroxylase domain.

The protein belongs to the sterol desaturase family.

It is found in the cell membrane. This chain is C-5 sterol desaturase (erg3), found in Mycobacterium bovis (strain ATCC BAA-935 / AF2122/97).